Consider the following 145-residue polypeptide: Small t antigen (145 aa).

The 77-residue stretch at 6–82 folds into the J domain; that stretch reads RLTELLCLPV…PEESGYATFE (77 aa). Residues 58 to 80 are disordered; that stretch reads EGLRADETLEDSDPEPEESGYAT. Over residues 65-75 the composition is skewed to acidic residues; it reads TLEDSDPEPEE.

Interacts with host PPP2R1A; the interaction inhibits PP2A activity.

The protein localises to the host cytoplasm. It localises to the host nucleus. Functionally, promotes efficient viral genome replication by accelerating both G1 and S phase progression of the cell cycle. The chain is Small t antigen from Budgerigar fledgling disease virus (BFPyV).